The chain runs to 180 residues: Transcriptional repressor NrdR (180 aa).

The segment at 3–34 (CPYCQNTSSRVLESRSTEAGQSIRRRRECLQC) is a zinc-finger region. Positions 49–139 (ISVLKKDKSK…VYGEFKGITD (91 aa)) constitute an ATP-cone domain. Residues 148 to 180 (QQEERESSSSPEWSDAGEEATVIEDSSQVMASS) are disordered. The span at 171 to 180 (EDSSQVMASS) shows a compositional bias: polar residues.

The protein belongs to the NrdR family. The cofactor is Zn(2+).

In terms of biological role, negatively regulates transcription of bacterial ribonucleotide reductase nrd genes and operons by binding to NrdR-boxes. This chain is Transcriptional repressor NrdR, found in Gloeothece citriformis (strain PCC 7424) (Cyanothece sp. (strain PCC 7424)).